We begin with the raw amino-acid sequence, 201 residues long: Probable quinol oxidase subunit 3 (201 aa).

The next 5 membrane-spanning stretches (helical) occupy residues Leu20 to Leu40, Leu62 to Tyr82, Leu91 to Ile111, Phe133 to Cys153, and Phe172 to Val192.

The protein belongs to the cytochrome c oxidase subunit 3 family.

The protein localises to the cell membrane. It carries out the reaction 2 a quinol + O2 = 2 a quinone + 2 H2O. In terms of biological role, catalyzes quinol oxidation with the concomitant reduction of oxygen to water. This chain is Probable quinol oxidase subunit 3 (qoxC), found in Staphylococcus haemolyticus (strain JCSC1435).